The sequence spans 313 residues: tRNA-cytidine(32) 2-sulfurtransferase (313 aa).

Residues 54-59 (SGGKDS) carry the PP-loop motif motif. The [4Fe-4S] cluster site is built by Cys129, Cys132, and Cys220.

Belongs to the TtcA family. As to quaternary structure, homodimer. Requires Mg(2+) as cofactor. It depends on [4Fe-4S] cluster as a cofactor.

The protein localises to the cytoplasm. The catalysed reaction is cytidine(32) in tRNA + S-sulfanyl-L-cysteinyl-[cysteine desulfurase] + AH2 + ATP = 2-thiocytidine(32) in tRNA + L-cysteinyl-[cysteine desulfurase] + A + AMP + diphosphate + H(+). The protein operates within tRNA modification. Catalyzes the ATP-dependent 2-thiolation of cytidine in position 32 of tRNA, to form 2-thiocytidine (s(2)C32). The sulfur atoms are provided by the cysteine/cysteine desulfurase (IscS) system. This is tRNA-cytidine(32) 2-sulfurtransferase from Methylibium petroleiphilum (strain ATCC BAA-1232 / LMG 22953 / PM1).